The primary structure comprises 337 residues: GDP-fucose transporter, Golgi (337 aa).

8 consecutive transmembrane segments (helical) span residues 13-35, 45-67, 95-117, 121-140, 145-163, 173-192, 205-227, and 242-264; these read NKYL…TVFV, VNLG…ICFV, ILPL…SYVT, YYIG…YVIL, SFKC…WLGV, SWRG…MFSI, VWLL…IIIN, and SWFW…VTAL.

It belongs to the TPT transporter family. SLC35C subfamily.

The protein resides in the golgi apparatus membrane. In terms of biological role, involved in GDP-fucose import from the cytoplasm into the Golgi lumen. Plays a major role in the fucosylation of N-glycans. Functions redundantly with Efr in the O-fucosylation of Notch, positively regulating Notch signaling. This is GDP-fucose transporter, Golgi from Drosophila melanogaster (Fruit fly).